The sequence spans 645 residues: Mediator of RNA polymerase II transcription subunit 17 (645 aa).

Positions 215–234 are disordered; sequence KAEDEESGSPPASPSGSGAA. Residues 222 to 234 show a composition bias toward low complexity; the sequence is GSPPASPSGSGAA.

Belongs to the Mediator complex subunit 17 family. In terms of assembly, component of the Mediator complex.

It is found in the nucleus. In terms of biological role, component of the Mediator complex, a coactivator involved in the regulated transcription of nearly all RNA polymerase II-dependent genes. Mediator functions as a bridge to convey information from gene-specific regulatory proteins to the basal RNA polymerase II transcription machinery. Mediator is recruited to promoters by direct interactions with regulatory proteins and serves as a scaffold for the assembly of a functional preinitiation complex with RNA polymerase II and the general transcription factors. The sequence is that of Mediator of RNA polymerase II transcription subunit 17 (MED17) from Anopheles gambiae (African malaria mosquito).